Consider the following 414-residue polypeptide: Cytochrome b (414 aa).

The next 2 membrane-spanning stretches (helical) occupy residues 40–60 (FFGSLAILTLVIQIVTGVWLA) and 84–104 (GWLIRYMHSTGASMFFIVIYL). Positions 91 and 105 each coordinate heme b. Helical transmembrane passes span 121 to 141 (LLWMIGVVIYLVMMATAFFGY), 154 to 174 (QVIVNLFAAVPVVGEDLSVWV), 188 to 208 (FFAFHFLLPFLLAGLVFLHIV), 252 to 272 (LMGVVVFLAIFGYVMFFNPTM), 294 to 314 (IAPVWYFTPFYAMLRAVPPMY), 317 to 337 (QFPGVVVMFAAILILFVLPWL), 351 to 371 (IFKWATGIFVVSFVALAWLGI), and 378 to 398 (YTLLSQIFTVLYFAYFLLMPI). Heme b is bound by residues H192 and H206.

This sequence belongs to the cytochrome b family. As to quaternary structure, the main subunits of complex b-c1 are: cytochrome b, cytochrome c1 and the Rieske protein. Heme b serves as cofactor.

Its subcellular location is the cell membrane. In terms of biological role, component of the ubiquinol-cytochrome c reductase complex (complex III or cytochrome b-c1 complex), which is a respiratory chain that generates an electrochemical potential coupled to ATP synthesis. The sequence is that of Cytochrome b (petB) from Allochromatium vinosum (strain ATCC 17899 / DSM 180 / NBRC 103801 / NCIMB 10441 / D) (Chromatium vinosum).